Here is a 329-residue protein sequence, read N- to C-terminus: Ketol-acid reductoisomerase (NADP(+)) (329 aa).

One can recognise a KARI N-terminal Rossmann domain in the interval 2-182 (VEIYYDDDAS…GGTRAGALRT (181 aa)). NADP(+) contacts are provided by residues 25-28 (YGSQ), Ser51, and Ser53. The active site involves His108. An NADP(+)-binding site is contributed by Gly134. Residues 183 to 328 (TFTEETETDL…AKLRPMMSWI (146 aa)) form the KARI C-terminal knotted domain. 4 residues coordinate Mg(2+): Asp191, Glu195, Glu227, and Glu231. Ser252 serves as a coordination point for substrate.

It belongs to the ketol-acid reductoisomerase family. The cofactor is Mg(2+).

The catalysed reaction is (2R)-2,3-dihydroxy-3-methylbutanoate + NADP(+) = (2S)-2-acetolactate + NADPH + H(+). It carries out the reaction (2R,3R)-2,3-dihydroxy-3-methylpentanoate + NADP(+) = (S)-2-ethyl-2-hydroxy-3-oxobutanoate + NADPH + H(+). It participates in amino-acid biosynthesis; L-isoleucine biosynthesis; L-isoleucine from 2-oxobutanoate: step 2/4. The protein operates within amino-acid biosynthesis; L-valine biosynthesis; L-valine from pyruvate: step 2/4. In terms of biological role, involved in the biosynthesis of branched-chain amino acids (BCAA). Catalyzes an alkyl-migration followed by a ketol-acid reduction of (S)-2-acetolactate (S2AL) to yield (R)-2,3-dihydroxy-isovalerate. In the isomerase reaction, S2AL is rearranged via a Mg-dependent methyl migration to produce 3-hydroxy-3-methyl-2-ketobutyrate (HMKB). In the reductase reaction, this 2-ketoacid undergoes a metal-dependent reduction by NADPH to yield (R)-2,3-dihydroxy-isovalerate. The polypeptide is Ketol-acid reductoisomerase (NADP(+)) (Frankia casuarinae (strain DSM 45818 / CECT 9043 / HFP020203 / CcI3)).